A 202-amino-acid polypeptide reads, in one-letter code: Recoverin (202 aa).

A lipid anchor (N-myristoyl glycine) is attached at Gly2. Cys39 carries the cysteine sulfenic acid (-SOH) modification. EF-hand domains lie at 41–59, 61–96, 97–132, and 147–182; these read SGRI…FFPD, DPKA…TTAG, KPTQ…IFKM, and TPEK…NKEI. 10 residues coordinate Ca(2+): Asp74, Asn76, Asp78, Thr80, Glu85, Asp110, Asp112, Asn114, Thr116, and Glu121. The interval 189 to 192 is interaction with GRK1; that stretch reads EPQK.

It belongs to the recoverin family. Homodimer; disulfide-linked. Homodimerization is caused by prolonged intense illumination. May form a complex composed of RHO, GRK1 and RCVRN in a Ca(2+)-dependent manner; RCVRN prevents the interaction between GRK1 and RHO. Interacts (via C-terminus) with GRK1 (via N-terminus); the interaction is Ca(2+)-dependent. The N-terminal glycine is linked to one of four different types of acyl groups. The most abundant is myristoleate (14:1), but 14:0, 14:2, and 12:0 acyl residues are also present. The Ca(2+) induced exposure of the myristoyl group, known as the calcium-myristoyl switch, promotes RCVRN binding to the photoreceptor cell membranes only when intracellular Ca(2+) concentration is high. Post-translationally, oxidation on Cys-39 occurs in response to prolonged intense illumination and results in the formation of disulfide homodimers, and to a lesser extent disulfide-linked heterodimers. Expressed in rod photoreceptors in the retina (at protein level).

Its subcellular location is the photoreceptor inner segment. The protein resides in the cell projection. It is found in the cilium. It localises to the photoreceptor outer segment. The protein localises to the photoreceptor outer segment membrane. Its subcellular location is the perikaryon. Functionally, acts as a calcium sensor and regulates phototransduction of cone and rod photoreceptor cells. Modulates light sensitivity of cone photoreceptor in dark and dim conditions. In response to high Ca(2+) levels induced by low light levels, prolongs RHO/rhodopsin activation in rod photoreceptor cells by binding to and inhibiting GRK1-mediated phosphorylation of RHO/rhodopsin. Plays a role in scotopic vision/enhances vision in dim light by enhancing signal transfer between rod photoreceptors and rod bipolar cells. Improves rod photoreceptor sensitivity in dim light and mediates response of rod photoreceptors to facilitate detection of change and motion in bright light. In Mus musculus (Mouse), this protein is Recoverin (Rcvrn).